A 466-amino-acid polypeptide reads, in one-letter code: Asparagine--tRNA ligase (466 aa).

The protein belongs to the class-II aminoacyl-tRNA synthetase family. In terms of assembly, homodimer.

The protein localises to the cytoplasm. It carries out the reaction tRNA(Asn) + L-asparagine + ATP = L-asparaginyl-tRNA(Asn) + AMP + diphosphate + H(+). The protein is Asparagine--tRNA ligase of Shewanella denitrificans (strain OS217 / ATCC BAA-1090 / DSM 15013).